The primary structure comprises 547 residues: CAP-Gly domain-containing linker protein 3 (547 aa).

Residues 1 to 49 form a disordered region; sequence MTKTDPAPMAPPPRGEEEEEEEEDEPVPEAPSPTQERRQKPVVHPSAPA. The segment covering 16 to 27 has biased composition (acidic residues); sequence EEEEEEEEDEPV. ANK repeat units follow at residues 117–158, 160–191, and 197–229; these read TDMT…LRSR, TNMNALHYAAYFDVPDLVRVLLKGARPRVVNS, and NHGSALHIAASNLCLGAAKCLLEHGANPALRNR. Residues 314 to 356 form the CAP-Gly 1 domain; sequence GTTEFASGQWVGVELDEPEGKNDGSVGGVRYFICPPKQGLFAS. Positions 365–413 are disordered; that stretch reads DAPPSSVTSTPRTPRMDFSRVTGKGRREHKGKKKSPSSPSLGSLQQREG. Residues 367-377 are compositionally biased toward low complexity; it reads PPSSVTSTPRT. Thr374 carries the post-translational modification Phosphothreonine. The span at 387 to 399 shows a compositional bias: basic residues; sequence GKGRREHKGKKKS. A phosphoserine mark is found at Ser399 and Ser401. Residues 436–478 enclose the CAP-Gly 2 domain; it reads GKTDFAPGYWYGIELDQPTGKHDGSVFGVRYFTCAPRHGVFAP. The goLD stretch occupies residues 488-547; that stretch reads STDPPGDSVGAKKVHQVTMTQPKRTFTTVRTPKDIASENSISRLLFCCWFPWMLRAEMQS. S-palmitoyl cysteine attachment occurs at residues Cys534 and Cys535.

As to quaternary structure, homodimer. Interacts with AKT1 and AKT2; when AKT1 and AKT2 are phosphorylated and activated, affinity is higher for AKT2. Interacts with ZDHHC13 (via ANK repeats). Interacts with ZDHHC17 (via ANK repeats). In terms of processing, palmitoylation by ZDHHC17 regulates association with the plasma membrane.

Its subcellular location is the cell membrane. The protein localises to the cytoplasm. It is found in the golgi apparatus. The protein resides in the golgi stack. Its function is as follows. Functions as a cytoplasmic linker protein. Involved in TGN-endosome dynamics. May modulate the cellular compartmentalization of AKT kinase family and promote its cell membrane localization, thereby playing a role in glucose transport in adipocytes. In Mus musculus (Mouse), this protein is CAP-Gly domain-containing linker protein 3 (Clip3).